A 995-amino-acid polypeptide reads, in one-letter code: Bifunctional glutamine synthetase adenylyltransferase/adenylyl-removing enzyme (995 aa).

An adenylyl removase region spans residues 1 to 487 (MNVTKPATQR…LHAKLFYQPL (487 aa)). Positions 492-995 (APAGLEIAGR…KAVVRKVFGS (504 aa)) are adenylyl transferase.

It belongs to the GlnE family. It depends on Mg(2+) as a cofactor.

The catalysed reaction is [glutamine synthetase]-O(4)-(5'-adenylyl)-L-tyrosine + phosphate = [glutamine synthetase]-L-tyrosine + ADP. The enzyme catalyses [glutamine synthetase]-L-tyrosine + ATP = [glutamine synthetase]-O(4)-(5'-adenylyl)-L-tyrosine + diphosphate. Functionally, involved in the regulation of glutamine synthetase GlnA, a key enzyme in the process to assimilate ammonia. When cellular nitrogen levels are high, the C-terminal adenylyl transferase (AT) inactivates GlnA by covalent transfer of an adenylyl group from ATP to specific tyrosine residue of GlnA, thus reducing its activity. Conversely, when nitrogen levels are low, the N-terminal adenylyl removase (AR) activates GlnA by removing the adenylyl group by phosphorolysis, increasing its activity. The regulatory region of GlnE binds the signal transduction protein PII (GlnB) which indicates the nitrogen status of the cell. This Mycobacterium marinum (strain ATCC BAA-535 / M) protein is Bifunctional glutamine synthetase adenylyltransferase/adenylyl-removing enzyme.